A 462-amino-acid polypeptide reads, in one-letter code: Glycogen synthase 1 (462 aa).

Arg-6 contributes to the ADP-alpha-D-glucose binding site.

The protein belongs to the glycosyltransferase 1 family. Bacterial/plant glycogen synthase subfamily.

It catalyses the reaction [(1-&gt;4)-alpha-D-glucosyl](n) + ADP-alpha-D-glucose = [(1-&gt;4)-alpha-D-glucosyl](n+1) + ADP + H(+). The protein operates within glycan biosynthesis; glycogen biosynthesis. Synthesizes alpha-1,4-glucan chains using ADP-glucose. This is Glycogen synthase 1 from Bradyrhizobium diazoefficiens (strain JCM 10833 / BCRC 13528 / IAM 13628 / NBRC 14792 / USDA 110).